The following is a 252-amino-acid chain: C4b-binding protein beta chain (252 aa).

A signal peptide spans 1-17 (MFFWCACCLMVAWRVSA). Sushi domains are found at residues 21 to 78 (EHCP…ECRL), 79 to 136 (GHCP…ICKS), and 137 to 193 (RDCD…VCKL). 6 disulfide bridges follow: C23-C63, C49-C76, C81-C121, C107-C134, C139-C179, and C165-C191. N-linked (GlcNAc...) asparagine glycans are attached at residues N64, N71, N98, N117, and N154.

As to quaternary structure, disulfide-linked complex of alpha and beta chains of 3 possible sorts: a 570 kDa complex of 7 alpha chains and 1 beta chain, a 530 kDa homoheptamer of alpha chains or a 500 kDa complex of 6 alpha chains and 1 beta chain. The central body of the alpha chain homomer supports tentacles, each with the binding site for C4b at the end.

Its subcellular location is the secreted. In terms of biological role, controls the classical pathway of complement activation. It binds as a cofactor to C3b/C4b inactivator (C3bINA), which then hydrolyzes the complement fragment C4b. It also accelerates the degradation of the C4bC2a complex (C3 convertase) by dissociating the complement fragment C2a. It also interacts with anticoagulant protein S and with serum amyloid P component. The beta chain binds protein S. The sequence is that of C4b-binding protein beta chain (C4BPB) from Homo sapiens (Human).